The chain runs to 102 residues: NAD(P)H-quinone oxidoreductase subunit 4L (102 aa).

3 consecutive transmembrane segments (helical) span residues 4 to 24 (LQFFLVVAAILFCIGIYGLIV), 33 to 53 (MSIELMLNAVNLNFMAFSNFV), and 65 to 85 (VFVITVAAAEAAVGLAIVLGI).

It belongs to the complex I subunit 4L family. NDH-1 can be composed of about 15 different subunits; different subcomplexes with different compositions have been identified which probably have different functions.

Its subcellular location is the cellular thylakoid membrane. The catalysed reaction is a plastoquinone + NADH + (n+1) H(+)(in) = a plastoquinol + NAD(+) + n H(+)(out). It catalyses the reaction a plastoquinone + NADPH + (n+1) H(+)(in) = a plastoquinol + NADP(+) + n H(+)(out). Its function is as follows. NDH-1 shuttles electrons from an unknown electron donor, via FMN and iron-sulfur (Fe-S) centers, to quinones in the respiratory and/or the photosynthetic chain. The immediate electron acceptor for the enzyme in this species is believed to be plastoquinone. Couples the redox reaction to proton translocation, and thus conserves the redox energy in a proton gradient. Cyanobacterial NDH-1 also plays a role in inorganic carbon-concentration. The polypeptide is NAD(P)H-quinone oxidoreductase subunit 4L (Synechococcus sp. (strain JA-3-3Ab) (Cyanobacteria bacterium Yellowstone A-Prime)).